The chain runs to 162 residues: Crossover junction endodeoxyribonuclease RuvC (162 aa).

Active-site residues include Asp-8, Glu-69, and His-141. Residues Asp-8, Glu-69, and His-141 each coordinate Mg(2+).

This sequence belongs to the RuvC family. In terms of assembly, homodimer which binds Holliday junction (HJ) DNA. The HJ becomes 2-fold symmetrical on binding to RuvC with unstacked arms; it has a different conformation from HJ DNA in complex with RuvA. In the full resolvosome a probable DNA-RuvA(4)-RuvB(12)-RuvC(2) complex forms which resolves the HJ. Mg(2+) serves as cofactor.

It is found in the cytoplasm. It carries out the reaction Endonucleolytic cleavage at a junction such as a reciprocal single-stranded crossover between two homologous DNA duplexes (Holliday junction).. In terms of biological role, the RuvA-RuvB-RuvC complex processes Holliday junction (HJ) DNA during genetic recombination and DNA repair. Endonuclease that resolves HJ intermediates. Cleaves cruciform DNA by making single-stranded nicks across the HJ at symmetrical positions within the homologous arms, yielding a 5'-phosphate and a 3'-hydroxyl group; requires a central core of homology in the junction. The consensus cleavage sequence is 5'-(A/T)TT(C/G)-3'. Cleavage occurs on the 3'-side of the TT dinucleotide at the point of strand exchange. HJ branch migration catalyzed by RuvA-RuvB allows RuvC to scan DNA until it finds its consensus sequence, where it cleaves and resolves the cruciform DNA. The protein is Crossover junction endodeoxyribonuclease RuvC of Wolbachia sp. subsp. Drosophila simulans (strain wRi).